Consider the following 300-residue polypeptide: Cation-efflux pump FieF (300 aa).

4 helical membrane-spanning segments follow: residues 11–31 (LAAV…VFAW), 40–60 (LASL…LLVV), 81–101 (LAAL…ILTG), and 114–134 (PEVG…LVSF). Zn(2+) is bound by residues Asp45 and Asp49. His153 and Asp157 together coordinate Zn(2+). A run of 2 helical transmembrane segments spans residues 156–176 (SDLL…KGIT) and 182–202 (FALG…YDAV).

The protein belongs to the cation diffusion facilitator (CDF) transporter (TC 2.A.4) family. FieF subfamily. Homodimer.

Its subcellular location is the cell inner membrane. The catalysed reaction is Zn(2+)(in) + H(+)(out) = Zn(2+)(out) + H(+)(in). It catalyses the reaction Cd(2+)(in) + H(+)(out) = Cd(2+)(out) + H(+)(in). The enzyme catalyses Fe(2+)(in) + H(+)(out) = Fe(2+)(out) + H(+)(in). Divalent metal cation transporter which exports Zn(2+), Cd(2+) and possibly Fe(2+). May be involved in zinc and iron detoxification by efflux. The protein is Cation-efflux pump FieF of Pectobacterium atrosepticum (strain SCRI 1043 / ATCC BAA-672) (Erwinia carotovora subsp. atroseptica).